The sequence spans 235 residues: Large ribosomal subunit protein uL1 (235 aa).

This sequence belongs to the universal ribosomal protein uL1 family. In terms of assembly, part of the 50S ribosomal subunit.

In terms of biological role, binds directly to 23S rRNA. The L1 stalk is quite mobile in the ribosome, and is involved in E site tRNA release. Functionally, protein L1 is also a translational repressor protein, it controls the translation of the L11 operon by binding to its mRNA. This chain is Large ribosomal subunit protein uL1, found in Prochlorococcus marinus (strain MIT 9303).